Here is a 516-residue protein sequence, read N- to C-terminus: Bifunctional purine biosynthesis protein PurH (516 aa).

The 149-residue stretch at 1–149 (MSERQPIRRA…KNHANVAVLT (149 aa)) folds into the MGS-like domain.

The protein belongs to the PurH family.

It catalyses the reaction (6R)-10-formyltetrahydrofolate + 5-amino-1-(5-phospho-beta-D-ribosyl)imidazole-4-carboxamide = 5-formamido-1-(5-phospho-D-ribosyl)imidazole-4-carboxamide + (6S)-5,6,7,8-tetrahydrofolate. The enzyme catalyses IMP + H2O = 5-formamido-1-(5-phospho-D-ribosyl)imidazole-4-carboxamide. Its pathway is purine metabolism; IMP biosynthesis via de novo pathway; 5-formamido-1-(5-phospho-D-ribosyl)imidazole-4-carboxamide from 5-amino-1-(5-phospho-D-ribosyl)imidazole-4-carboxamide (10-formyl THF route): step 1/1. It participates in purine metabolism; IMP biosynthesis via de novo pathway; IMP from 5-formamido-1-(5-phospho-D-ribosyl)imidazole-4-carboxamide: step 1/1. This Cutibacterium acnes (strain DSM 16379 / KPA171202) (Propionibacterium acnes) protein is Bifunctional purine biosynthesis protein PurH.